The following is a 166-amino-acid chain: Nucleotide-binding protein CV_2047 (166 aa).

It belongs to the YajQ family.

In terms of biological role, nucleotide-binding protein. The chain is Nucleotide-binding protein CV_2047 from Chromobacterium violaceum (strain ATCC 12472 / DSM 30191 / JCM 1249 / CCUG 213 / NBRC 12614 / NCIMB 9131 / NCTC 9757 / MK).